We begin with the raw amino-acid sequence, 172 residues long: Molybdopterin synthase catalytic subunit (172 aa).

At serine 20 the chain carries Phosphoserine. Substrate is bound by residues 127-128, lysine 143, and 150-152; these read HR and KKE.

This sequence belongs to the MoaE family. MOCS2B subfamily. Heterotetramer; composed of 2 small (MOCS2A) and 2 large (MOCS2B) subunits.

It is found in the cytoplasm. The protein resides in the cytosol. It catalyses the reaction 2 [molybdopterin-synthase sulfur-carrier protein]-C-terminal-Gly-aminoethanethioate + cyclic pyranopterin phosphate + H2O = molybdopterin + 2 [molybdopterin-synthase sulfur-carrier protein]-C-terminal Gly-Gly + 2 H(+). It participates in cofactor biosynthesis; molybdopterin biosynthesis. Functionally, catalytic subunit of the molybdopterin synthase complex, a complex that catalyzes the conversion of precursor Z into molybdopterin. Acts by mediating the incorporation of 2 sulfur atoms from thiocarboxylated MOCS2A into precursor Z to generate a dithiolene group. The sequence is that of Molybdopterin synthase catalytic subunit from Pongo abelii (Sumatran orangutan).